Here is a 199-residue protein sequence, read N- to C-terminus: Imidazole glycerol phosphate synthase subunit HisH (199 aa).

One can recognise a Glutamine amidotransferase type-1 domain in the interval 3-199 (NITIIDTGCA…LKNFVEKVPF (197 aa)). Cys78 serves as the catalytic Nucleophile. Active-site residues include His178 and Glu180.

As to quaternary structure, heterodimer of HisH and HisF.

It localises to the cytoplasm. It carries out the reaction 5-[(5-phospho-1-deoxy-D-ribulos-1-ylimino)methylamino]-1-(5-phospho-beta-D-ribosyl)imidazole-4-carboxamide + L-glutamine = D-erythro-1-(imidazol-4-yl)glycerol 3-phosphate + 5-amino-1-(5-phospho-beta-D-ribosyl)imidazole-4-carboxamide + L-glutamate + H(+). It catalyses the reaction L-glutamine + H2O = L-glutamate + NH4(+). It participates in amino-acid biosynthesis; L-histidine biosynthesis; L-histidine from 5-phospho-alpha-D-ribose 1-diphosphate: step 5/9. Functionally, IGPS catalyzes the conversion of PRFAR and glutamine to IGP, AICAR and glutamate. The HisH subunit catalyzes the hydrolysis of glutamine to glutamate and ammonia as part of the synthesis of IGP and AICAR. The resulting ammonia molecule is channeled to the active site of HisF. The chain is Imidazole glycerol phosphate synthase subunit HisH (hisH) from Haemophilus influenzae (strain ATCC 51907 / DSM 11121 / KW20 / Rd).